Consider the following 332-residue polypeptide: Ribosomal RNA small subunit methyltransferase C (332 aa).

Belongs to the methyltransferase superfamily. RsmC family. In terms of assembly, monomer.

It localises to the cytoplasm. The catalysed reaction is guanosine(1207) in 16S rRNA + S-adenosyl-L-methionine = N(2)-methylguanosine(1207) in 16S rRNA + S-adenosyl-L-homocysteine + H(+). Functionally, specifically methylates the guanine in position 1207 of 16S rRNA in the 30S particle. This Pseudomonas syringae pv. syringae (strain B728a) protein is Ribosomal RNA small subunit methyltransferase C.